The following is a 282-amino-acid chain: 40S small subunit processome assembly factor 1 (282 aa).

Disordered stretches follow at residues tyrosine 27–proline 98 and phenylalanine 121–lysine 143. Residues lysine 48–alanine 59 show a composition bias toward basic and acidic residues. A phosphoserine mark is found at serine 67 and serine 75. The segment covering serine 89 to proline 98 has biased composition (low complexity). Positions lysine 131–lysine 143 are enriched in basic and acidic residues. Lysine 173 is subject to N6-acetyllysine. A compositionally biased stretch (basic and acidic residues) spans glutamate 208 to phenylalanine 226. The disordered stretch occupies residues glutamate 208–alanine 254. Serine 268 carries the phosphoserine modification.

As to quaternary structure, part of the small subunit (SSU) processome, composed of more than 70 proteins and the RNA chaperone small nucleolar RNA (snoRNA) U3.

Its subcellular location is the chromosome. The protein resides in the nucleus. The protein localises to the nucleolus. Its function is as follows. Part of the small subunit (SSU) processome, first precursor of the small eukaryotic ribosomal subunit. During the assembly of the SSU processome in the nucleolus, many ribosome biogenesis factors, an RNA chaperone and ribosomal proteins associate with the nascent pre-rRNA and work in concert to generate RNA folding, modifications, rearrangements and cleavage as well as targeted degradation of pre-ribosomal RNA by the RNA exosome. Prevents helicase DHX37 to be recruited before post-A1 state. This is 40S small subunit processome assembly factor 1 from Rattus norvegicus (Rat).